The primary structure comprises 458 residues: MTAKTIFDKLWDRHVVAGNEGEPQLLYIDLHVIHEVTSPQAFQGLRDAGRSVRRRDLTYGTLDHNVPTKDIFNIQDLISKKQIDTFTKNVKEFGIPAEAHGGKGQGIVHMVAPESGRTQPGKTIVCGDSHTATNGAFGAIAFGIGTSEVEHVLATQTIWQVKPKRMKIEFQGHPQKGVYSKDFILALIAKYGVDAGVGYAVEYTGNAISDLSMEERMTICNMSIEFGAKMGQMNPDEKTYDYVKGREYAPENFDEAVSKWEKLVSDSDAVYDKVLTLDVSQLKPMVTWGTNPGMGLEFGEEFPKINDDLNYERAYQYMDLKPGQTASDIDLGYIFIGSCTNARLGDLEEAAKIIKGNHIADGLTGIVVPGSRPVKIADEELGLDKIFKNAGFEWREPVCSACLGMNPDQIPAYVHCASTSNRNFEGRQGHNARTHLCSPAMAAAAAIAGKFVDVREIV.

Cys-339, Cys-399, and Cys-402 together coordinate [4Fe-4S] cluster.

The protein belongs to the aconitase/IPM isomerase family. LeuC type 1 subfamily. Heterodimer of LeuC and LeuD. [4Fe-4S] cluster is required as a cofactor.

It catalyses the reaction (2R,3S)-3-isopropylmalate = (2S)-2-isopropylmalate. The protein operates within amino-acid biosynthesis; L-leucine biosynthesis; L-leucine from 3-methyl-2-oxobutanoate: step 2/4. Its function is as follows. Catalyzes the isomerization between 2-isopropylmalate and 3-isopropylmalate, via the formation of 2-isopropylmaleate. This is 3-isopropylmalate dehydratase large subunit from Lactococcus lactis subsp. cremoris (strain SK11).